The following is a 315-amino-acid chain: T cell receptor beta chain MC.7.G5 (315 aa).

An N-terminal signal peptide occupies residues 1-21 (MTIRLLCYMGFYFLGAGLMEA). An Ig-like V-type domain is found at 22–114 (DIYQTPRYLV…TSQYLCASSE (93 aa)). The interval 22–114 (DIYQTPRYLV…TSQYLCASSE (93 aa)) is t cell receptor beta variable 25-1. Cys-42 and Cys-110 form a disulfide bridge. Residues 46–50 (MGHDK) are CDR1. The interval 68–73 (SYGVNS) is CDR2. Asn-72 carries an N-linked (GlcNAc...) asparagine glycan. A CDR3 region spans residues 110 to 127 (CASSEARGLAEFTDTQYF). Residues 122 to 136 (TDTQYFGPGTRLTVL) are t cell receptor beta joining 2-3. The tract at residues 138–315 (DLKNVFPPEV…AMVKRKDSRG (178 aa)) is t cell receptor beta constant 2. The 110-residue stretch at 145–254 (PEVAVFEPSE…WTQDRAKPVT (110 aa)) folds into the Ig-like C1-type domain. Cys-167 and Cys-232 are disulfide-bonded. Residue Asn-206 is glycosylated (N-linked (GlcNAc...) asparagine). Residues 267–281 (CGFTSESYQQGVLSA) form a connecting peptide region. A helical transmembrane segment spans residues 282 to 304 (TILYEILLGKATLYAVLVSALVL). The Cytoplasmic portion of the chain corresponds to 305-315 (MAMVKRKDSRG).

As to quaternary structure, disulfide-linked heterodimer with TRAV38-2DV8*01J31*01C*01 alpha chain. The alpha-beta TR associates with the transmembrane signaling CD3 coreceptor proteins to form the TR-CD3 (TCR). The assembly of alpha-beta TR heterodimers with CD3 occurs in the endoplasmic reticulum where a single alpha-beta TR heterodimer associates with one CD3D-CD3E heterodimer, one CD3G-CD3E heterodimer and one CD247 homodimer forming a stable octameric structure. CD3D-CD3E and CD3G-CD3E heterodimers preferentially associate with TR alpha and TR beta chains (via TM domain), respectively. The association of the CD247 homodimer is the last step of TCR assembly in the endoplasmic reticulum and is required for transport to the cell surface. Expressed in MR1-restricted CD8-positive T cells.

The protein resides in the cell membrane. In terms of biological role, the beta chain of TRAV38-2DV8*01J31*01C*01/TRBV25-1*01J2S3*01C2*01 alpha-beta T cell receptor (TR) clonotype that displays pan-cancer cell recognition via the invariant MR1 molecule. On CD8-positive T cell clone MC.7.G5, likely recognizes tumor-specific or -associated metabolite(s) essential for cancer cell survival, triggering killing of many cancer cell types including lung, melanoma, leukemia, colon, breast, prostate, bone and ovarian cancer cells. Mediates cancer cell cytotoxicity in an HLA-independent manner. Has no reactivity to healthy cells even stressed or infected by bacteria. Antigen recognition initiates TR-CD3 clustering on the cell surface and intracellular activation of LCK that phosphorylates the ITAM motifs of CD3G, CD3D, CD3E and CD247 enabling the recruitment of ZAP70. In turn, ZAP70 phosphorylates LAT, which recruits numerous signaling molecules to form the LAT signalosome. The LAT signalosome propagates signal branching to three major signaling pathways, the calcium, the mitogen-activated protein kinase (MAPK) kinase and the nuclear factor NF-kappa-B (NF-kB) pathways, leading to the mobilization of transcription factors that are critical for gene expression and essential for T cell differentiation into effector/memory T cells. In Homo sapiens (Human), this protein is T cell receptor beta chain MC.7.G5.